The following is a 163-amino-acid chain: Nucleotide-binding protein CYA_0935 (163 aa).

This sequence belongs to the YajQ family.

Functionally, nucleotide-binding protein. This is Nucleotide-binding protein CYA_0935 from Synechococcus sp. (strain JA-3-3Ab) (Cyanobacteria bacterium Yellowstone A-Prime).